The following is a 144-amino-acid chain: Large ribosomal subunit protein uL13 (144 aa).

The protein belongs to the universal ribosomal protein uL13 family. In terms of assembly, part of the 50S ribosomal subunit.

In terms of biological role, this protein is one of the early assembly proteins of the 50S ribosomal subunit, although it is not seen to bind rRNA by itself. It is important during the early stages of 50S assembly. The protein is Large ribosomal subunit protein uL13 of Herpetosiphon aurantiacus (strain ATCC 23779 / DSM 785 / 114-95).